The primary structure comprises 475 residues: Argininosuccinate lyase (475 aa).

This sequence belongs to the lyase 1 family. Argininosuccinate lyase subfamily.

The protein resides in the cytoplasm. It catalyses the reaction 2-(N(omega)-L-arginino)succinate = fumarate + L-arginine. It functions in the pathway amino-acid biosynthesis; L-arginine biosynthesis; L-arginine from L-ornithine and carbamoyl phosphate: step 3/3. The protein is Argininosuccinate lyase of Leifsonia xyli subsp. xyli (strain CTCB07).